The primary structure comprises 148 residues: UPF0756 membrane protein ESA_02180 (148 aa).

Helical transmembrane passes span 4–24, 51–71, 86–106, and 112–132; these read ITLL…NMAV, VTVG…SGTL, LVAI…VALM, and IVAG…GVPV.

This sequence belongs to the UPF0756 family.

It localises to the cell membrane. The protein is UPF0756 membrane protein ESA_02180 of Cronobacter sakazakii (strain ATCC BAA-894) (Enterobacter sakazakii).